A 65-amino-acid chain; its full sequence is Large ribosomal subunit protein uL29 (65 aa).

This sequence belongs to the universal ribosomal protein uL29 family.

The chain is Large ribosomal subunit protein uL29 from Dehalococcoides mccartyi (strain ATCC BAA-2100 / JCM 16839 / KCTC 5957 / BAV1).